Consider the following 231-residue polypeptide: Fibronectin type III domain-containing protein 4 (231 aa).

Residues 1–40 form the signal peptide; the sequence is MPLAPPANSVETMASLMPLSPYLSPTVLLLVSCDLGFVRA. The Extracellular segment spans residues 41–163; it reads DRPPSPVNVT…GLDGERPLQT (123 aa). Residues 43–136 enclose the Fibronectin type-III domain; sequence PPSPVNVTVT…PRVHFRTLKG (94 aa). Asn48 and Asn143 each carry an N-linked (GlcNAc...) asparagine glycan. The segment at 118 to 156 is disordered; sequence GLRGESPPGPRVHFRTLKGSDRLPSNSSSPGDITVEGLD. Residues 164 to 184 traverse the membrane as a helical segment; sequence GEVVIIVVVLLMWAAVIGLFC. Over 185 to 231 the chain is Cytoplasmic; the sequence is RQYDIIKDNDSNNNPKEKGKGPEQSPQGRPVGTTRQKKSPSINTIDV. The span at 193-205 shows a compositional bias: basic and acidic residues; that stretch reads NDSNNNPKEKGKG. A disordered region spans residues 193-231; the sequence is NDSNNNPKEKGKGPEQSPQGRPVGTTRQKKSPSINTIDV.

Predominantly expressed in the liver and in the brain, including in the cortex, hypothalamus and hippocampus. Also expressed in heart, lung, kidney and testis. In the colon, expressed in the epithelium and in a subset of immune cells in lymphoid aggregates.

It is found in the membrane. Its subcellular location is the secreted. Its function is as follows. Has anti-inflammatory properties. In the colon, acts on macrophages to down-regulate inflammation. May suppress osteoclastogenesis and mature osteoclast resorptive function. In white adipose tissue, decreases local inflammation, via interaction with GPR116. Also required for proper systemic glucose tolerance, specifically sensitizing white adipocytes to insulin and promoting glucose uptake. The insulin sensitizing function in adipose tissue is mediated by interaction with ADGRF5/GPR116 and activation of cAMP signaling. This Mus musculus (Mouse) protein is Fibronectin type III domain-containing protein 4 (Fndc4).